The chain runs to 81 residues: Small ribosomal subunit protein bS18 (81 aa).

It belongs to the bacterial ribosomal protein bS18 family. Part of the 30S ribosomal subunit. Forms a tight heterodimer with protein bS6.

Functionally, binds as a heterodimer with protein bS6 to the central domain of the 16S rRNA, where it helps stabilize the platform of the 30S subunit. This is Small ribosomal subunit protein bS18 from Chloroflexus aurantiacus (strain ATCC 29366 / DSM 635 / J-10-fl).